The chain runs to 185 residues: Large ribosomal subunit protein uL5 (185 aa).

The protein belongs to the universal ribosomal protein uL5 family. Part of the 50S ribosomal subunit; part of the 5S rRNA/L5/L18/L25 subcomplex. Contacts the 5S rRNA and the P site tRNA. Forms a bridge to the 30S subunit in the 70S ribosome.

Its function is as follows. This is one of the proteins that bind and probably mediate the attachment of the 5S RNA into the large ribosomal subunit, where it forms part of the central protuberance. In the 70S ribosome it contacts protein S13 of the 30S subunit (bridge B1b), connecting the 2 subunits; this bridge is implicated in subunit movement. Contacts the P site tRNA; the 5S rRNA and some of its associated proteins might help stabilize positioning of ribosome-bound tRNAs. This is Large ribosomal subunit protein uL5 from Bartonella bacilliformis (strain ATCC 35685 / KC583 / Herrer 020/F12,63).